Here is a 232-residue protein sequence, read N- to C-terminus: MSGEGENPASKPTPVQDVQGDGRWMSLHHRFVADSKDKEPEVVFIGDSLVQLMHQCEIWRELFSPLHALNFGIGGDSTQHVLWRLENGELEHIRPKIVVVWVGTNNHSHTAEQVTGGIKAIVQLVNKLQPQARVVVLGLLPRGQHPNPLREKNRQVNELVRAALAGYPRAHFLDADPGFVHSDGTISHHDMYDYLHLSRLGYTPVCRALHSLLLRLLAQDQGQGIPLPETAS.

Residues 1 to 20 (MSGEGENPASKPTPVQDVQG) are disordered. At S2 the chain carries N-acetylserine. At S2 the chain carries Phosphoserine. Catalysis depends on residues S48, D193, and H196.

The protein belongs to the 'GDSL' lipolytic enzyme family. Platelet-activating factor acetylhydrolase IB beta/gamma subunits subfamily. As to quaternary structure, forms a catalytic dimer which is either homodimer (alpha1/alpha1 homodimer) or heterodimer with PAFAH1B2 (alpha1/alpha2 heterodimer). Component of the cytosolic (PAF-AH (I)) heterotetrameric enzyme, which is composed of PAFAH1B1 (beta), PAFAH1B2 (alpha2) and PAFAH1B3 (alpha1) subunits. The catalytic activity of the enzyme resides in the alpha1 (PAFAH1B3) and alpha2 (PAFAH1B2) subunits, whereas the beta subunit (PAFAH1B1) has regulatory activity. Trimer formation is not essential for the catalytic activity. Interacts with VLDLR; this interaction may modulate the Reelin pathway.

It localises to the cytoplasm. It carries out the reaction a 1-O-alkyl-2-acetyl-sn-glycero-3-phosphocholine + H2O = a 1-O-alkyl-sn-glycero-3-phosphocholine + acetate + H(+). It catalyses the reaction 1-O-hexadecyl-2-acetyl-sn-glycero-3-phosphocholine + H2O = 1-O-hexadecyl-sn-glycero-3-phosphocholine + acetate + H(+). The enzyme catalyses 1-O-hexadecyl-2-acetyl-sn-glycero-3-phosphate + H2O = 1-O-hexadecyl-sn-glycero-3-phosphate + acetate + H(+). With respect to regulation, beta subunit (PAFAH1B1) inhibits the acetylhydrolase activity of the alpha1/alpha1 catalytic homodimer. Its function is as follows. Alpha1 catalytic subunit of the cytosolic type I platelet-activating factor (PAF) acetylhydrolase (PAF-AH (I)) heterotetrameric enzyme that catalyzes the hydrolyze of the acetyl group at the sn-2 position of PAF and its analogs and modulates the action of PAF. The activity and substrate specificity of PAF-AH (I) are affected by its subunit composition. Both alpha1/alpha1 homodimer (PAFAH1B3/PAFAH1B3 homodimer) and alpha1/alpha2 heterodimer(PAFAH1B3/PAFAH1B2 heterodimer) hydrolyze 1-O-alkyl-2-acetyl-sn-glycero-3-phosphoric acid (AAGPA) more efficiently than PAF, but they have little hydrolytic activity towards 1-O-alkyl-2-acetyl-sn-glycero-3-phosphorylethanolamine (AAGPE). Plays an important role during the development of brain. The sequence is that of Platelet-activating factor acetylhydrolase IB subunit alpha1 from Mus musculus (Mouse).